Reading from the N-terminus, the 372-residue chain is 4-hydroxy-3-methylbut-2-en-1-yl diphosphate synthase (flavodoxin) (372 aa).

4 residues coordinate [4Fe-4S] cluster: cysteine 270, cysteine 273, cysteine 305, and glutamate 312.

This sequence belongs to the IspG family. It depends on [4Fe-4S] cluster as a cofactor.

It catalyses the reaction (2E)-4-hydroxy-3-methylbut-2-enyl diphosphate + oxidized [flavodoxin] + H2O + 2 H(+) = 2-C-methyl-D-erythritol 2,4-cyclic diphosphate + reduced [flavodoxin]. It functions in the pathway isoprenoid biosynthesis; isopentenyl diphosphate biosynthesis via DXP pathway; isopentenyl diphosphate from 1-deoxy-D-xylulose 5-phosphate: step 5/6. Its function is as follows. Converts 2C-methyl-D-erythritol 2,4-cyclodiphosphate (ME-2,4cPP) into 1-hydroxy-2-methyl-2-(E)-butenyl 4-diphosphate. In Enterobacter sp. (strain 638), this protein is 4-hydroxy-3-methylbut-2-en-1-yl diphosphate synthase (flavodoxin).